The sequence spans 154 residues: Interleukin-7 (154 aa).

The signal sequence occupies residues 1–25 (MFHVSFRYIFGIPPLILVLLPVTSS). 3 cysteine pairs are disulfide-bonded: Cys27/Cys145, Cys58/Cys133, and Cys71/Cys116. N-linked (GlcNAc...) asparagine glycans are attached at residues Asn94 and Asn115.

It belongs to the IL-7/IL-9 family. As to quaternary structure, interacts with IL7R and CSF2RG. Three disulfide bonds are present.

Its subcellular location is the secreted. In terms of biological role, hematopoietic cytokine that plays an essential role in the development, expansion, and survival of naive and memory T-cells and B-cells thereby regulating the number of mature lymphocytes and maintaining lymphoid homeostasis. Mechanistically, exerts its biological effects through a receptor composed of IL7RA subunit and the cytokine receptor common subunit gamma/CSF2RG. Binding to the receptor leads to activation of various kinases including JAK1 or JAK3 depending on the cell type and subsequently propagation of signals through activation of several downstream signaling pathways including the PI3K/Akt/mTOR or the JAK-STAT5. The protein is Interleukin-7 (Il7) of Mus musculus (Mouse).